Here is a 318-residue protein sequence, read N- to C-terminus: Protein OPG137 (318 aa).

Residues 145–172 (VYDKDKRIQMLEDEVVNLRNQRSNTKSS) are a coiled coil.

Belongs to the orthopoxvirus OPG137 family. In terms of assembly, homomultimer. Interacts with OPG160. Post-translationally, phosphorylated by a OPG054-independent mechanism.

The protein resides in the host cytoplasm. Its function is as follows. Required for viral crescent formation early during virus morphogenesis. The protein is Protein OPG137 (OPG137) of Vaccinia virus (strain Western Reserve) (VACV).